The sequence spans 1237 residues: Tyrosine-protein kinase sid-3 (1237 aa).

The region spanning 107–369 is the Protein kinase domain; the sequence is IKLYELIGEG…REDLVAAMFL (263 aa). ATP contacts are provided by residues 113 to 121 and Lys139; that span reads IGEGSFAVV. The active-site Proton acceptor is the Asp230. The region spanning 366-426 is the SH3 domain; sequence AMFLDAVARE…PRSVVFAQTN (61 aa). Disordered stretches follow at residues 683-704, 741-802, 826-919, 940-986, 999-1018, and 1134-1156; these read NQGS…GIQN, PPAP…APVQ, IQPQ…EERR, SNST…SEPI, SATT…PSPP, and QQRQ…SAAS. 3 stretches are compositionally biased toward polar residues: residues 749–766, 778–791, and 847–863; these read QPVS…TLQK, KRPT…SNGF, and SAPT…SQAS. 2 stretches are compositionally biased toward low complexity: residues 881-910 and 940-961; these read TPIT…TSTT and SNST…PSTA. Positions 1138-1156 are enriched in low complexity; it reads AGSSSRAVPPASASTSAAS.

Belongs to the protein kinase superfamily. Tyr protein kinase family. SYK/ZAP-70 subfamily. As to expression, ubiquitously present in all tissues tested. Expressed in the somatic cells of gut, pharynx, body wall muscle, neurons, skin and excretory canal cells.

The protein resides in the cytoplasm. The enzyme catalyses L-tyrosyl-[protein] + ATP = O-phospho-L-tyrosyl-[protein] + ADP + H(+). Functionally, tyrosine-protein kinase which plays a role in RNA-mediated gene silencing by mediating import of double-stranded RNA (dsRNA) into cells. Not required for import of ingested dsRNA into intestinal cells but involved in subsequent export from intestinal cells to internal tissues. This is Tyrosine-protein kinase sid-3 (sid-3) from Caenorhabditis elegans.